Here is an 89-residue protein sequence, read N- to C-terminus: Cell division topological specificity factor (89 aa).

Belongs to the MinE family.

In terms of biological role, prevents the cell division inhibition by proteins MinC and MinD at internal division sites while permitting inhibition at polar sites. This ensures cell division at the proper site by restricting the formation of a division septum at the midpoint of the long axis of the cell. This is Cell division topological specificity factor from Pectobacterium carotovorum subsp. carotovorum (strain PC1).